The sequence spans 315 residues: Lipoyl synthase (315 aa).

[4Fe-4S] cluster contacts are provided by Cys62, Cys67, Cys73, Cys88, Cys92, Cys95, and Ser302. A Radical SAM core domain is found at 73 to 291 (CFGHGTATFM…GELAKKLGFS (219 aa)).

The protein belongs to the radical SAM superfamily. Lipoyl synthase family. [4Fe-4S] cluster serves as cofactor.

It is found in the cytoplasm. It carries out the reaction [[Fe-S] cluster scaffold protein carrying a second [4Fe-4S](2+) cluster] + N(6)-octanoyl-L-lysyl-[protein] + 2 oxidized [2Fe-2S]-[ferredoxin] + 2 S-adenosyl-L-methionine + 4 H(+) = [[Fe-S] cluster scaffold protein] + N(6)-[(R)-dihydrolipoyl]-L-lysyl-[protein] + 4 Fe(3+) + 2 hydrogen sulfide + 2 5'-deoxyadenosine + 2 L-methionine + 2 reduced [2Fe-2S]-[ferredoxin]. It functions in the pathway protein modification; protein lipoylation via endogenous pathway; protein N(6)-(lipoyl)lysine from octanoyl-[acyl-carrier-protein]: step 2/2. Functionally, catalyzes the radical-mediated insertion of two sulfur atoms into the C-6 and C-8 positions of the octanoyl moiety bound to the lipoyl domains of lipoate-dependent enzymes, thereby converting the octanoylated domains into lipoylated derivatives. This is Lipoyl synthase from Coxiella burnetii (strain CbuG_Q212) (Coxiella burnetii (strain Q212)).